Consider the following 167-residue polypeptide: DNA-directed RNA polymerase II subunit rpb-9 (167 aa).

The interval 28–49 is disordered; it reads DDMYDQNGASPAPSQNEKPGKS. Residues 34–44 show a composition bias toward polar residues; sequence NGASPAPSQNE. C59, C62, C81, C84, C128, C131, C156, and C161 together coordinate Zn(2+). Residues 59–84 form a C4-type zinc finger; the sequence is CPECNNMLYPREDKESRVLMYSCRNC. The segment at 124-166 adopts a TFIIS-type zinc-finger fold; sequence EEHQCPVCGKSKAVFFQAQTKKAEEEMRLYYVCASQDCQHRWT.

The protein belongs to the archaeal RpoM/eukaryotic RPA12/RPB9/RPC11 RNA polymerase family. In terms of assembly, component of the RNA polymerase II (Pol II) complex consisting of 12 subunits. As to expression, expressed in the soma and in the germline.

The protein localises to the nucleus. Its subcellular location is the nucleolus. Its function is as follows. DNA-dependent RNA polymerase catalyzes the transcription of DNA into RNA using the four ribonucleoside triphosphates as substrates. Component of RNA polymerase II which synthesizes mRNA precursors and many functional non-coding RNAs. Pol II is the central component of the basal RNA polymerase II transcription machinery. It is composed of mobile elements that move relative to each other. RPB9 is part of the upper jaw surrounding the central large cleft and thought to grab the incoming DNA template. Recruits ints-6, a component of the Integrator complex to PIWI-interacting RNA (piRNA) genes, to mediate Integrator complex-dependent cleavage of 3' ends of nascent transcripts upon RNA Pol II backtracking to terminate transcription and generate piRNA precursors. Promotes the biogenesis of secondary 22G-siRNAs (a class of 22 nucleotide siRNAs that possess a triphosphorylated guanine residue at the 5'-end). Involved in gene silencing mediated by a class of 21 nucleotide piRNAs that possess a uracil residue at the 5'-end (also called 21U-RNAs) and guide the Piwi protein prg-1 to its DNA targets for silencing. Plays a role in small RNA-directed transgenerational epigenetic inheritance (also called RNAe) over several generations. Not required for the transgenerational inheritance of exogenous small interfering RNAs (RNAi). May play a role in the silencing of the DNA transposable elements from the DNA transposon families, Chapaev-2 and CEMUDR1. The chain is DNA-directed RNA polymerase II subunit rpb-9 from Caenorhabditis elegans.